Consider the following 358-residue polypeptide: MNPFPRAEISSSALQTNLAALRQQAPASRVMAVVKANGYGHGLLNVAHCLVSADGFGLARLDEALELRAGGVTARLLLLEGFFRATDLPLLVGHDIDTVVHHSSQLEMLEQTVLSKPVTVWLKVDSGMHRLGFTPEQFSTVYDRLMACPNVAKPIHLMTHFACADEPDNTYTSVQMAAFNSLTAGLPGFRTLANSAGALYWPQSQGDWIRPGIALYGVSPVTGDCGANHGLVPAMELVSQLIAVRDHKANQPVGYGCFWTAKQDTRLGVVAIGYGDGYPRNAPEGTPVWVNGRRVPIVGRVSMDMLTVDLGQDAQDKVGDSALLWGKALPVEEVAEHIGTIAYELVTKLTPRVAVCLA.

K35 functions as the Proton acceptor; specific for D-alanine in the catalytic mechanism. K35 is modified (N6-(pyridoxal phosphate)lysine). Position 130 (R130) interacts with substrate. Y255 acts as the Proton acceptor; specific for L-alanine in catalysis. M303 lines the substrate pocket.

This sequence belongs to the alanine racemase family. Requires pyridoxal 5'-phosphate as cofactor.

The enzyme catalyses L-alanine = D-alanine. Its pathway is amino-acid biosynthesis; D-alanine biosynthesis; D-alanine from L-alanine: step 1/1. In terms of biological role, catalyzes the interconversion of L-alanine and D-alanine. May also act on other amino acids. In Shewanella baltica (strain OS223), this protein is Alanine racemase (alr).